The chain runs to 142 residues: Small ribosomal subunit protein bS6 (142 aa).

Residues 113–136 (IKKEPREPREPRAPREPKAEKIEE) are compositionally biased toward basic and acidic residues. A disordered region spans residues 113–142 (IKKEPREPREPRAPREPKAEKIEEQTFSEE).

It belongs to the bacterial ribosomal protein bS6 family.

Functionally, binds together with bS18 to 16S ribosomal RNA. This chain is Small ribosomal subunit protein bS6, found in Campylobacter curvus (strain 525.92).